Consider the following 127-residue polypeptide: Urotensin-2 (127 aa).

A signal peptide spans 1 to 16 (MSKLFFCCLILAGSFC). Residues 17 to 111 (SFRSLPIIVP…RLQSKDRKQF (95 aa)) constitute a propeptide that is removed on maturation. Cys121 and Cys126 form a disulfide bridge.

It belongs to the urotensin-2 family. In terms of tissue distribution, central nervous system. Spinal cord.

It is found in the secreted. Involved in smooth muscle stimulating and ion mobilizing activities. It has a suggested role as a corticotropin-releasing factor. This is Urotensin-2 (UTS2) from Pelophylax ridibundus (Marsh frog).